A 47-amino-acid chain; its full sequence is uncharacterized protein (47 aa).

The disordered stretch occupies residues 19–47; that stretch reads EKVLKNQNPDRLSHMTDKNAQPKSKEKEE.

This is an uncharacterized protein from Bacillus subtilis (strain 168).